The primary structure comprises 164 residues: Phosphopantetheine adenylyltransferase (164 aa).

Residue Ser-9 participates in substrate binding. ATP is bound by residues 9-10 (SF) and His-17. 3 residues coordinate substrate: Lys-41, Ala-78, and Arg-92. Residues 93–95 (GLR), Glu-103, and 128–134 (SRPITAT) each bind ATP.

This sequence belongs to the bacterial CoaD family. Homohexamer. Requires Mg(2+) as cofactor.

The protein localises to the cytoplasm. The catalysed reaction is (R)-4'-phosphopantetheine + ATP + H(+) = 3'-dephospho-CoA + diphosphate. Its pathway is cofactor biosynthesis; coenzyme A biosynthesis; CoA from (R)-pantothenate: step 4/5. Functionally, reversibly transfers an adenylyl group from ATP to 4'-phosphopantetheine, yielding dephospho-CoA (dPCoA) and pyrophosphate. This chain is Phosphopantetheine adenylyltransferase, found in Allorhizobium ampelinum (strain ATCC BAA-846 / DSM 112012 / S4) (Agrobacterium vitis (strain S4)).